Here is a 105-residue protein sequence, read N- to C-terminus: Integration host factor subunit beta (105 aa).

It belongs to the bacterial histone-like protein family. Heterodimer of an alpha and a beta chain.

Functionally, this protein is one of the two subunits of integration host factor, a specific DNA-binding protein that functions in genetic recombination as well as in transcriptional and translational control. This chain is Integration host factor subunit beta, found in Bradyrhizobium sp. (strain ORS 278).